The following is a 259-amino-acid chain: Imidazole glycerol phosphate synthase subunit HisF (259 aa).

Active-site residues include Asp-11 and Asp-130.

It belongs to the HisA/HisF family. As to quaternary structure, heterodimer of HisH and HisF.

The protein localises to the cytoplasm. The enzyme catalyses 5-[(5-phospho-1-deoxy-D-ribulos-1-ylimino)methylamino]-1-(5-phospho-beta-D-ribosyl)imidazole-4-carboxamide + L-glutamine = D-erythro-1-(imidazol-4-yl)glycerol 3-phosphate + 5-amino-1-(5-phospho-beta-D-ribosyl)imidazole-4-carboxamide + L-glutamate + H(+). Its pathway is amino-acid biosynthesis; L-histidine biosynthesis; L-histidine from 5-phospho-alpha-D-ribose 1-diphosphate: step 5/9. Its function is as follows. IGPS catalyzes the conversion of PRFAR and glutamine to IGP, AICAR and glutamate. The HisF subunit catalyzes the cyclization activity that produces IGP and AICAR from PRFAR using the ammonia provided by the HisH subunit. The protein is Imidazole glycerol phosphate synthase subunit HisF of Variovorax paradoxus (strain S110).